Consider the following 101-residue polypeptide: Osteocalcin (101 aa).

Residues 1-18 form the signal peptide; it reads MKLAIVLLLLGLAVLCLG. Positions 19 to 52 are excised as a propeptide; sequence GKDSQHSASAGDSRSSEAFISRQDSANFARRHKR. The Gla domain maps to 53 to 99; it reads SYRYNVARGAAVTSPLESQREVCELNPDCDELADHIGFQEAYRRFYG. Residues Glu-69, Glu-73, Glu-76, and Asp-82 each contribute to the Ca(2+) site. Glu-69, Glu-73, and Glu-76 each carry 4-carboxyglutamate. A disulfide bridge links Cys-75 with Cys-81.

Belongs to the osteocalcin/matrix Gla protein family. Post-translationally, gamma-carboxyglutamate residues are formed by vitamin K dependent carboxylation by GGCX. These residues are essential for the binding of calcium.

It is found in the secreted. In terms of biological role, the carboxylated form is one of the main organic components of the bone matrix, which constitutes 1-2% of the total bone protein. The carboxylated form binds strongly to apatite and calcium. This Xenopus tropicalis (Western clawed frog) protein is Osteocalcin (bglap).